The primary structure comprises 125 residues: Large ribosomal subunit protein uL30 (125 aa).

The tract at residues 1–61 is large ribosomal subunit protein uL30; the sequence is MSKLKVKLLR…HLVGVAYRID (61 aa). The segment at 62-125 is unknown; sequence FSGDIPTVER…KNWKGEEVEL (64 aa).

This sequence belongs to the universal ribosomal protein uL30 family. As to quaternary structure, part of the 50S ribosomal subunit.

The chain is Large ribosomal subunit protein uL30 from Aquifex aeolicus (strain VF5).